Consider the following 287-residue polypeptide: Small ribosomal subunit biogenesis GTPase RsgA (287 aa).

The region spanning 61 to 218 (ISQLKRPAVA…MVDTPGFSSL (158 aa)) is the CP-type G domain. Residues 110 to 113 (NKLD) and 161 to 169 (GPSGVGKST) each bind GTP. C242, C247, H249, and C255 together coordinate Zn(2+).

It belongs to the TRAFAC class YlqF/YawG GTPase family. RsgA subfamily. In terms of assembly, monomer. Associates with 30S ribosomal subunit, binds 16S rRNA. Zn(2+) is required as a cofactor.

It localises to the cytoplasm. In terms of biological role, one of several proteins that assist in the late maturation steps of the functional core of the 30S ribosomal subunit. Helps release RbfA from mature subunits. May play a role in the assembly of ribosomal proteins into the subunit. Circularly permuted GTPase that catalyzes slow GTP hydrolysis, GTPase activity is stimulated by the 30S ribosomal subunit. This chain is Small ribosomal subunit biogenesis GTPase RsgA, found in Clostridium kluyveri (strain NBRC 12016).